The following is a 450-amino-acid chain: Tubulin alpha-2 chain (450 aa).

GTP contacts are provided by glutamine 11, glutamate 71, glycine 144, threonine 145, threonine 179, asparagine 206, and asparagine 228. Glutamate 71 serves as a coordination point for Mg(2+). Residue glutamate 254 is part of the active site. Threonine 349 carries the post-translational modification Phosphothreonine. Residues 430–450 are disordered; the sequence is KDYEEVGAEGGDDEDDEGEEY. The span at 431–450 shows a compositional bias: acidic residues; sequence DYEEVGAEGGDDEDDEGEEY.

This sequence belongs to the tubulin family. Dimer of alpha and beta chains. A typical microtubule is a hollow water-filled tube with an outer diameter of 25 nm and an inner diameter of 15 nM. Alpha-beta heterodimers associate head-to-tail to form protofilaments running lengthwise along the microtubule wall with the beta-tubulin subunit facing the microtubule plus end conferring a structural polarity. Microtubules usually have 13 protofilaments but different protofilament numbers can be found in some organisms and specialized cells. Mg(2+) is required as a cofactor. In terms of processing, undergoes a tyrosination/detyrosination cycle, the cyclic removal and re-addition of a C-terminal tyrosine residue by the enzymes tubulin tyrosine carboxypeptidase (TTCP) and tubulin tyrosine ligase (TTL), respectively. Acetylation of alpha chains at Lys-40 stabilizes microtubules and affects affinity and processivity of microtubule motors. This modification has a role in multiple cellular functions, ranging from cell motility, cell cycle progression or cell differentiation to intracellular trafficking and signaling.

Its subcellular location is the cytoplasm. The protein localises to the cytoskeleton. It carries out the reaction GTP + H2O = GDP + phosphate + H(+). Tubulin is the major constituent of microtubules, a cylinder consisting of laterally associated linear protofilaments composed of alpha- and beta-tubulin heterodimers. Microtubules grow by the addition of GTP-tubulin dimers to the microtubule end, where a stabilizing cap forms. Below the cap, tubulin dimers are in GDP-bound state, owing to GTPase activity of alpha-tubulin. The sequence is that of Tubulin alpha-2 chain (TUBA2) from Arabidopsis thaliana (Mouse-ear cress).